Reading from the N-terminus, the 215-residue chain is Probable GTP-binding protein EngB (215 aa).

The EngB-type G domain occupies 31-215 (GPPEIAFAGR…RTAILQAVVQ (185 aa)). GTP is bound by residues 39–46 (GRSNVGKS), 66–70 (GRTQE), 93–96 (DMPG), 160–163 (TKSD), and 194–196 (TSA). Serine 46 and threonine 68 together coordinate Mg(2+).

The protein belongs to the TRAFAC class TrmE-Era-EngA-EngB-Septin-like GTPase superfamily. EngB GTPase family. Requires Mg(2+) as cofactor.

Necessary for normal cell division and for the maintenance of normal septation. In Bartonella bacilliformis (strain ATCC 35685 / KC583 / Herrer 020/F12,63), this protein is Probable GTP-binding protein EngB.